Here is a 565-residue protein sequence, read N- to C-terminus: Laccase-12 (565 aa).

The N-terminal stretch at 1-24 is a signal peptide; sequence MTTVHTFSILLFFCSLFSASLIIA. Plastocyanin-like domains are found at residues 32-148 and 158-310; these read VIQE…PTPG and RQTA…YKKT. The N-linked (GlcNAc...) asparagine glycan is linked to N78. Cu cation contacts are provided by H82, H84, H127, and H129. Residues N187, N203, N298, N325, N377, N387, N395, and N428 are each glycosylated (N-linked (GlcNAc...) asparagine). A Plastocyanin-like 3 domain is found at 413-549; the sequence is DFPSKPPVKF…AMAFLVDNGV (137 aa). 7 residues coordinate Cu cation: H466, H469, H471, H528, C529, H530, and H534.

This sequence belongs to the multicopper oxidase family. Cu cation is required as a cofactor. Predominantly expressed in the inflorescence stem.

The protein resides in the secreted. The protein localises to the extracellular space. It localises to the apoplast. The catalysed reaction is 4 hydroquinone + O2 = 4 benzosemiquinone + 2 H2O. In terms of biological role, lignin degradation and detoxification of lignin-derived products. This Arabidopsis thaliana (Mouse-ear cress) protein is Laccase-12 (LAC12).